A 24-amino-acid chain; its full sequence is Unknown protein 6 (24 aa).

In Lonomia obliqua (Moth), this protein is Unknown protein 6.